A 300-amino-acid chain; its full sequence is MNQSYGRLVSRAAIAATAMASLLLLIKIFAWWYTGSVSILAALVDSLVDIGASLTNLLVVRYSLQPADDNHSFGHGKAESLAALAQSMFISGSALFLFLTGIQHLVSPTPMTDPGVGVIVTIVALICTIILVSFQRWVVRRTQSQAVRADMLHYQSDVMMNGAILLALGLSWYGWHRADALFALGIGIYILYSALRMGYEAVQSLLDRALPDEERQEIIDIVASWPGVSGAHDLRTRQSGPTRFIQIHLEMEDSLPLVQAHMVADQVEQAILRRFPGSDVIIHQDPCSVVPREGKRSMLS.

The next 4 membrane-spanning stretches (helical) occupy residues 12–32 (AAIAATAMASLLLLIKIFAWW), 39–59 (ILAALVDSLVDIGASLTNLLV), 82–102 (AALAQSMFISGSALFLFLTGI), and 114–134 (PGVGVIVTIVALICTIILVSF). Residues aspartate 45 and aspartate 49 each coordinate Zn(2+). Residues histidine 153 and aspartate 157 each contribute to the Zn(2+) site. The next 2 membrane-spanning stretches (helical) occupy residues 156–176 (SDVMMNGAILLALGLSWYGWH) and 178–198 (ADALFALGIGIYILYSALRMG).

The protein belongs to the cation diffusion facilitator (CDF) transporter (TC 2.A.4) family. FieF subfamily. Homodimer.

The protein localises to the cell inner membrane. The catalysed reaction is Zn(2+)(in) + H(+)(out) = Zn(2+)(out) + H(+)(in). It catalyses the reaction Cd(2+)(in) + H(+)(out) = Cd(2+)(out) + H(+)(in). It carries out the reaction Fe(2+)(in) + H(+)(out) = Fe(2+)(out) + H(+)(in). Its function is as follows. Divalent metal cation transporter which exports Zn(2+), Cd(2+) and possibly Fe(2+). May be involved in zinc and iron detoxification by efflux. The chain is Cation-efflux pump FieF from Escherichia coli O127:H6 (strain E2348/69 / EPEC).